Reading from the N-terminus, the 111-residue chain is Notch-regulated ankyrin repeat-containing protein B (111 aa).

ANK repeat units follow at residues Glu-47–Leu-76 and Asp-80–Ser-109.

Belongs to the NRARP family.

Regulates independently canonical Wnt and Notch signaling by modulating LEF1 and Notch protein turnover. Stabilizes LEF1, a pivotal transcription factor in the Wnt signaling cascade, by blocking its ubiquitination. Involved in angiogenesis; involved in intersegmental vessel patterning during development. In Danio rerio (Zebrafish), this protein is Notch-regulated ankyrin repeat-containing protein B (nrarpb).